Consider the following 538-residue polypeptide: NAD(P)H-quinone oxidoreductase chain 4 (538 aa).

14 helical membrane-spanning segments follow: residues 11–31 (FPWL…VPFI), 43–63 (YALI…FKGF), 95–115 (MPLI…AWPV), 119–139 (PKLF…VFAV), 143–163 (LLFF…LAIW), 175–195 (FIIY…AMGF), 217–237 (GFQL…LPIV), 251–271 (TAPV…YALL), 285–305 (FAPL…LTSF), 314–334 (IAYS…SFSS), 340–360 (AMLQ…LVGA), 382–404 (IMFA…SGFI), 425–445 (IVVA…LLSM), and 472–492 (IYII…PKIM).

Belongs to the complex I subunit 4 family.

The protein resides in the cellular thylakoid membrane. It catalyses the reaction a plastoquinone + NADH + (n+1) H(+)(in) = a plastoquinol + NAD(+) + n H(+)(out). The catalysed reaction is a plastoquinone + NADPH + (n+1) H(+)(in) = a plastoquinol + NADP(+) + n H(+)(out). NDH-1 shuttles electrons from NAD(P)H, via FMN and iron-sulfur (Fe-S) centers, to quinones in the respiratory chain. The immediate electron acceptor for the enzyme in this species is believed to be plastoquinone. Couples the redox reaction to proton translocation (for every two electrons transferred, four hydrogen ions are translocated across the cytoplasmic membrane), and thus conserves the redox energy in a proton gradient. This is NAD(P)H-quinone oxidoreductase chain 4 from Prochlorococcus marinus (strain NATL2A).